The chain runs to 681 residues: Methionine--tRNA ligase (681 aa).

The short motif at Asp27–His37 is the 'HIGH' region element. The 'KMSKS' region motif lies at Lys316–Ser320. Lys319 provides a ligand contact to ATP. Residues Phe522–Gln571 form a disordered region. Residues Pro525 to Pro539 are compositionally biased toward basic and acidic residues. The tRNA-binding domain maps to Asp580–Arg681.

It belongs to the class-I aminoacyl-tRNA synthetase family. MetG type 2B subfamily. As to quaternary structure, homodimer.

Its subcellular location is the cytoplasm. It carries out the reaction tRNA(Met) + L-methionine + ATP = L-methionyl-tRNA(Met) + AMP + diphosphate. Is required not only for elongation of protein synthesis but also for the initiation of all mRNA translation through initiator tRNA(fMet) aminoacylation. This Deinococcus radiodurans (strain ATCC 13939 / DSM 20539 / JCM 16871 / CCUG 27074 / LMG 4051 / NBRC 15346 / NCIMB 9279 / VKM B-1422 / R1) protein is Methionine--tRNA ligase (metG).